We begin with the raw amino-acid sequence, 213 residues long: Imidazole glycerol phosphate synthase subunit HisH (213 aa).

Residues 1–212 form the Glutamine amidotransferase type-1 domain; the sequence is MLAILDYKAG…HRYCTEAADA (212 aa). Catalysis depends on Cys-79, which acts as the Nucleophile. Catalysis depends on residues His-187 and Glu-189.

As to quaternary structure, heterodimer of HisH and HisF.

It is found in the cytoplasm. The enzyme catalyses 5-[(5-phospho-1-deoxy-D-ribulos-1-ylimino)methylamino]-1-(5-phospho-beta-D-ribosyl)imidazole-4-carboxamide + L-glutamine = D-erythro-1-(imidazol-4-yl)glycerol 3-phosphate + 5-amino-1-(5-phospho-beta-D-ribosyl)imidazole-4-carboxamide + L-glutamate + H(+). It carries out the reaction L-glutamine + H2O = L-glutamate + NH4(+). Its pathway is amino-acid biosynthesis; L-histidine biosynthesis; L-histidine from 5-phospho-alpha-D-ribose 1-diphosphate: step 5/9. In terms of biological role, IGPS catalyzes the conversion of PRFAR and glutamine to IGP, AICAR and glutamate. The HisH subunit catalyzes the hydrolysis of glutamine to glutamate and ammonia as part of the synthesis of IGP and AICAR. The resulting ammonia molecule is channeled to the active site of HisF. This chain is Imidazole glycerol phosphate synthase subunit HisH, found in Nitratidesulfovibrio vulgaris (strain ATCC 29579 / DSM 644 / CCUG 34227 / NCIMB 8303 / VKM B-1760 / Hildenborough) (Desulfovibrio vulgaris).